A 207-amino-acid chain; its full sequence is Large ribosomal subunit protein uL4 (207 aa).

The tract at residues 44–76 (KRRGTASAKTRSEVRGGGRKPWRQKGTGRARHG) is disordered. Residues 60 to 76 (GGRKPWRQKGTGRARHG) show a composition bias toward basic residues.

The protein belongs to the universal ribosomal protein uL4 family. Part of the 50S ribosomal subunit.

One of the primary rRNA binding proteins, this protein initially binds near the 5'-end of the 23S rRNA. It is important during the early stages of 50S assembly. It makes multiple contacts with different domains of the 23S rRNA in the assembled 50S subunit and ribosome. In terms of biological role, forms part of the polypeptide exit tunnel. The sequence is that of Large ribosomal subunit protein uL4 from Natranaerobius thermophilus (strain ATCC BAA-1301 / DSM 18059 / JW/NM-WN-LF).